Here is a 515-residue protein sequence, read N- to C-terminus: Maturase K (515 aa).

Belongs to the intron maturase 2 family. MatK subfamily.

The protein resides in the plastid. The protein localises to the chloroplast. In terms of biological role, usually encoded in the trnK tRNA gene intron. Probably assists in splicing its own and other chloroplast group II introns. The protein is Maturase K of Trillium luteum (Yellow wakerobin).